The sequence spans 302 residues: tRNA dimethylallyltransferase (302 aa).

Residue 8–15 coordinates ATP; it reads GSSGSGKS. Substrate is bound at residue 10 to 15; it reads SGSGKS. The tract at residues 33–36 is interaction with substrate tRNA; sequence DSLS.

Belongs to the IPP transferase family. Monomer. It depends on Mg(2+) as a cofactor.

It carries out the reaction adenosine(37) in tRNA + dimethylallyl diphosphate = N(6)-dimethylallyladenosine(37) in tRNA + diphosphate. In terms of biological role, catalyzes the transfer of a dimethylallyl group onto the adenine at position 37 in tRNAs that read codons beginning with uridine, leading to the formation of N6-(dimethylallyl)adenosine (i(6)A). The polypeptide is tRNA dimethylallyltransferase (Helicobacter hepaticus (strain ATCC 51449 / 3B1)).